Here is a 707-residue protein sequence, read N- to C-terminus: DCC-interacting protein 13-alpha (707 aa).

A required for RAB5A binding region spans residues 1–428; the sequence is MPGIDKLPIE…PPTARTSSSG (428 aa). One can recognise a BAR domain in the interval 3-268; the sequence is GIDKLPIEET…DPLYLPDPDP (266 aa). Positions 234–257 form a coiled coil; the sequence is QNVRREMDGDVETMQQTIEDLEVA. One can recognise a PH domain in the interval 277–375; sequence LTRKAGYLNA…WICTINNISK (99 aa). Disordered stretches follow at residues 397 to 433, 466 to 490, and 636 to 707; these read AVTP…LGSE, GQAK…STKS, and EKQK…ESEA. A Phosphothreonine modification is found at threonine 399. Serine 401 carries the phosphoserine modification. Residues 403–414 carry the F&amp;H motif; that stretch reads SFQQRHESLRPG. Residue serine 410 is modified to Phosphoserine; by PKA. Residues 495–655 enclose the PID domain; the sequence is SILHQLFIVR…EKQQKELSKQ (161 aa). Residues 620–670 are a coiled coil; sequence LAKQIALHAELDRRASEKQKEIERVKEKQQKELSKQKQIEKDLEEQSRLIA. Over residues 636–666 the composition is skewed to basic and acidic residues; it reads EKQKEIERVKEKQQKELSKQKQIEKDLEEQS. Residues 679–691 are compositionally biased toward low complexity; sequence GSEGQLVLSSSQS. 2 positions are modified to phosphoserine: serine 691 and serine 694. The segment covering 698 to 707 has biased composition (basic and acidic residues); sequence EEGKKRESEA.

As to quaternary structure, homodimer. Binds RAB5A/Rab5 through an N-terminal domain. This interaction is essential for its recruitment to endosomal membranes as well as its role in cell proliferation. Binds DCC and the catalytic domain of the inactive form of AKT2 through its PID domain. Binds PIK3CA and subunits of the NuRD/MeCP1 complex. Interacts with OCRL and INPP5B. Interacts with NTRK2. Interacts with APPL2; interaction is independent of follicle stimulating hormone stimulation; interaction is decreased by adiponectin in a time-dependent manner. Forms a complex with APPL2 and RUVBL2. Forms a complex comprising APPL2, RUVBL2, CTNNB1, HDAC1 and HDAC2; interaction reduces interaction between CTNNB1, HDAC1, HDAC2 and RUVBL2 leading to the decrease of deacetylase activity of this complex; affects the recruitment of repressive complexes to the Wnt target genes. Interacts with ANXA2. Interacts with TGFBR1; interaction is TGF beta dependent; mediates trafficking of the TGFBR1 from the endosomes to the nucleus via microtubules in a TRAF6-dependent manner. Interacts with PRKCZ. Interacts with PIK3R1 and APPL2. Interacts with ADIPOR1; ADIPOQ enhances this interaction; inhibites adiponectin-stimulated binding of APPL2 to ADIPOR1. Phosphorylation at Ser-410 by PKA severely impairs binding to OCRL. Expressed in insulin-target tissues including skeletal muscle, liver, fat, and brain.

It localises to the early endosome membrane. It is found in the nucleus. Its subcellular location is the cytoplasm. The protein resides in the endosome. The protein localises to the cell projection. It localises to the ruffle. It is found in the cytoplasmic vesicle. Its subcellular location is the phagosome. Multifunctional adapter protein that binds to various membrane receptors, nuclear factors and signaling proteins to regulate many processes, such as cell proliferation, immune response, endosomal trafficking and cell metabolism. Regulates signaling pathway leading to cell proliferation through interaction with RAB5A and subunits of the NuRD/MeCP1 complex. Functions as a positive regulator of innate immune response via activation of AKT1 signaling pathway by forming a complex with APPL1 and PIK3R1. Inhibits Fc-gamma receptor-mediated phagocytosis through PI3K/Akt signaling in macrophages. Regulates TLR4 signaling in activated macrophages. Involved in trafficking of the TGFBR1 from the endosomes to the nucleus via microtubules in a TRAF6-dependent manner. Plays a role in cell metabolism by regulating adiponecting and insulin signaling pathways. Required for fibroblast migration through HGF cell signaling. Positive regulator of beta-catenin/TCF-dependent transcription through direct interaction with RUVBL2/reptin resulting in the relief of RUVBL2-mediated repression of beta-catenin/TCF target genes by modulating the interactions within the beta-catenin-reptin-HDAC complex. The sequence is that of DCC-interacting protein 13-alpha from Mus musculus (Mouse).